The sequence spans 352 residues: Ion-translocating oxidoreductase complex subunit D (352 aa).

A run of 4 helical transmembrane segments spans residues 20–40 (IMLLVVIAALPGIAAQTWFFG), 42–62 (GTLFQIVLAAITALVAEAIVL), 69–91 (VASHLQDYSALLTGLLLAVSIPP), and 123–143 (PAMIGYVVLLISFPVQMTSWL). An FMN phosphoryl threonine modification is found at Thr-187. Helical transmembrane passes span 215 to 235 (LAGVGWQWVNLAWLVGGVFLL), 242 to 262 (WHIPVSFLLTLALCAALGWLF), 267 to 287 (LASPQLHLLSGATMLGAFFIL), 301 to 321 (LIFGALAGVLVWLIRSFGGYP), and 322 to 342 (DGVAFAVLLANITVPLIDYYT).

Belongs to the NqrB/RnfD family. In terms of assembly, the complex is composed of six subunits: RsxA, RsxB, RsxC, RsxD, RsxE and RsxG. FMN serves as cofactor.

Its subcellular location is the cell inner membrane. Functionally, part of a membrane-bound complex that couples electron transfer with translocation of ions across the membrane. Required to maintain the reduced state of SoxR. The protein is Ion-translocating oxidoreductase complex subunit D of Salmonella enteritidis PT4 (strain P125109).